The chain runs to 277 residues: Soluble NSF attachment protein 29 (277 aa).

Residues 1–11 (MSRNPFDDDYR) are compositionally biased toward basic and acidic residues. Disordered stretches follow at residues 1–30 (MSRNPFDDDYRPSAASSTMPVKSYTTMGHY), 49–73 (ESLDSTERSRRHLENSEKIGTSTAQ), and 117–170 (KFTK…ESSR). Over residues 14–28 (AASSTMPVKSYTTMG) the composition is skewed to polar residues. The t-SNARE coiled-coil homology 1 domain maps to 44–106 (EKTLQESLDS…QMTQRNLNSL (63 aa)). The span at 49-65 (ESLDSTERSRRHLENSE) shows a compositional bias: basic and acidic residues. Over residues 134–170 (SKSASRLSETATNLSSGGGSATFSGPSGQRTLTESSR) the composition is skewed to polar residues. The t-SNARE coiled-coil homology 2 domain occupies 179–241 (EAMDNQIDEN…RDQDKQMQKI (63 aa)).

It belongs to the SNAP-25 family.

The protein resides in the synapse. Its subcellular location is the synaptosome. Functionally, SNAREs, soluble N-ethylmaleimide-sensitive factor-attachment protein receptors, are essential proteins for fusion of cellular membranes. SNAREs localized on opposing membranes assemble to form a trans-SNARE complex, an extended, parallel four alpha-helical bundle that drives membrane fusion. Plays a role in the processing and secretion of the aspartic protease hrg-7 from the intestine. This chain is Soluble NSF attachment protein 29, found in Caenorhabditis elegans.